Here is a 152-residue protein sequence, read N- to C-terminus: Ribosome maturation factor RimP (152 aa).

It belongs to the RimP family.

It localises to the cytoplasm. Functionally, required for maturation of 30S ribosomal subunits. The chain is Ribosome maturation factor RimP from Yersinia enterocolitica serotype O:8 / biotype 1B (strain NCTC 13174 / 8081).